The primary structure comprises 393 residues: MAELRQVPGGRETPQGELRPEVVEDEVPRSPVAEEPGGGGSSSSEAKLSPREEEELDPRIQEELEHLNQASEEINQVELQLDEARTTYRRILQESARKLNTQGSHLGSCIEKARPYYEARRLAKEAQQETQKAALRYERAVSMHNAAREMVLVAEQGVMADKNRLDPTWQEMLNHATCKVNEAEEERLRGEREHQRVTRLCQQAEARVQALQKTLRRAIGKSRPYFELKAQFSQILEEHKAKVTELEQQVAQAKTRYSVALRNLEQISEQIHARRRGDLPPHPLGPRRSSPVGAEAGPEDTGDGDSGIEGAEGAGLEEGSSLGPGPAPDTDTLSLLSLRTVASDLQKCDSVEHLRGLSDHVSLDGQELGTRSGGRRGSDGGVRGGRHQRSVSL.

Disordered regions lie at residues Met-1 to Arg-59 and His-272 to Thr-332. Residue Thr-13 is modified to Phosphothreonine. Residues Leu-18–Pro-28 are compositionally biased toward basic and acidic residues. Phosphoserine occurs at positions 30 and 49. Coiled-coil stretches lie at residues Arg-59 to Ala-140 and Trp-169 to His-272. Residues Gly-304–Gly-313 show a composition bias toward gly residues. A compositionally biased stretch (low complexity) spans Glu-317–Thr-332. Phosphoserine is present on residues Ser-343, Ser-350, Ser-358, Ser-362, and Ser-378. The tract at residues Asp-364–Leu-393 is disordered. Basic residues predominate over residues Gly-384–Leu-393.

This sequence belongs to the SH3BP5 family.

Functionally, functions as a guanine nucleotide exchange factor (GEF) for RAB11A. The sequence is that of SH3 domain-binding protein 5-like (SH3BP5L) from Pongo abelii (Sumatran orangutan).